Here is a 213-residue protein sequence, read N- to C-terminus: GAIDSKLDWSHNFTNMLGYTEPQFTELMRLYLTIHSDHEGGNVSAHTSHLVGSALSDPYLSFAAAMNGLAGPLHGLANQEVLVWLTQLQKEVGKDVSDEKLRDYIWNTLNSGRVVPGYGHAVLRKTDPRYSCQREFALKHLPNDPLFKLVAQLYKIVPNILLEQGKAKNPWPNVDAHSGVLLQYYGMTEMNYYTVLFGVSRALGVLAQLIWSR.

His74 is an active-site residue. An N6-acetyllysine; alternate mark is found at Lys94 and Lys100. An N6-succinyllysine; alternate mark is found at Lys94 and Lys100. The active site involves His120. An oxaloacetate-binding site is contributed by Arg129. At Lys148 the chain carries N6-acetyllysine; alternate. Lys148 carries the N6-succinyllysine; alternate modification. An N6-acetyllysine modification is found at Lys155. Lys166 is subject to N6-acetyllysine; alternate. The residue at position 166 (Lys166) is an N6-succinyllysine; alternate. Lys168 is subject to N6,N6,N6-trimethyllysine. The active site involves Asp175. An oxaloacetate-binding site is contributed by Arg201.

This sequence belongs to the citrate synthase family. Homodimer. In response to mitochondrial stress, the precursor protein is ubiquitinated by the SIFI complex in the cytoplasm before mitochondrial import, leading to its degradation. Within the SIFI complex, UBR4 initiates ubiquitin chain that are further elongated or branched by KCMF1.

It is found in the mitochondrion matrix. It carries out the reaction oxaloacetate + acetyl-CoA + H2O = citrate + CoA + H(+). It participates in carbohydrate metabolism; tricarboxylic acid cycle; isocitrate from oxaloacetate: step 1/2. Key enzyme of the Krebs tricarboxylic acid cycle which catalyzes the synthesis of citrate from acetyl coenzyme A and oxaloacetate. The sequence is that of Citrate synthase, mitochondrial from Mesocricetus auratus (Golden hamster).